A 495-amino-acid polypeptide reads, in one-letter code: Potassium voltage-gated channel subfamily A member 1 (495 aa).

Residues 1–30 (MTVMSGENADEASTAPGHPQDGSYPRQADH) form a disordered region. Residues 1 to 128 (MTVMSGENAD…FYELGEEAME (128 aa)) form a tetramerization domain region. The Cytoplasmic portion of the chain corresponds to 1–164 (MTVMSGENAD…LLFEYPESSG (164 aa)). A Phosphoserine modification is found at Ser23. Residues 165–186 (PARVIAIVSVMVILISIVIFCL) form a helical membrane-spanning segment. At 187-220 (ETLPELKDDKDFTGTIHRIDNTTVIYTSNIFTDP) the chain is on the extracellular side. N-linked (GlcNAc...) asparagine glycosylation occurs at Asn207. A helical transmembrane segment spans residues 221–242 (FFIVETLCIIWFSFELVVRFFA). Cys243 carries S-palmitoyl cysteine lipidation. Residues 243–253 (CPSKTDFFKNI) lie on the Cytoplasmic side of the membrane. A helical transmembrane segment spans residues 254–274 (MNFIDIVAIIPYFITLGTEIA). At 275–287 (EQEGNQKGEQATS) the chain is on the extracellular side. Residues 288-308 (LAILRVIRLVRVFRIFKLSRH) traverse the membrane as a helical; Voltage-sensor segment. The Cytoplasmic segment spans residues 309 to 323 (SKGLQILGQTLKASM). The tract at residues 310–323 (KGLQILGQTLKASM) is S4-S5 linker. Ser322 carries the phosphoserine; by PKA modification. The chain crosses the membrane as a helical span at residues 324-345 (RELGLLIFFLFIGVILFSSAVY). The Extracellular portion of the chain corresponds to 346-359 (FAEAEEAESHFSSI). Residues 360-371 (PDAFWWAVVSMT) constitute an intramembrane region (helical). The Selectivity filter motif lies at 372–377 (TVGYGD). An intramembrane segment occupies 372 to 379 (TVGYGDMY). Topologically, residues 380–386 (PVTIGGK) are extracellular. A helical transmembrane segment spans residues 387-415 (IVGSLCAIAGVLTIALPVPVIVSNFNYFY). Topologically, residues 416–495 (HRETEGEEQA…VNKSKLLTDV (80 aa)) are cytoplasmic. Phosphoserine occurs at positions 437 and 439. Position 446 is a phosphoserine; by PKA (Ser446). The short motif at 493–495 (TDV) is the PDZ-binding element.

This sequence belongs to the potassium channel family. A (Shaker) (TC 1.A.1.2) subfamily. Kv1.1/KCNA1 sub-subfamily. Homotetramer and heterotetramer with other channel-forming alpha subunits, such as KCNA2, KCNA4, KCNA5, KCNA6 and KCNA7. Channel activity is regulated by interaction with the beta subunits KCNAB1 and KCNAB2. Identified in a complex with KCNA2 and KCNAB2. Interacts (via C-terminus) with the PDZ domains of DLG1, DLG2 and DLG4. Interacts with LGI1 within a complex containing LGI1, KCNA4 and KCNAB1. Interacts (via N-terminus) with STX1A; this promotes channel inactivation. Interacts (via N-terminus) with the heterodimer formed by GNB1 and GNG2; this promotes channel inactivation. Can interact simultaneously with STX1A and the heterodimer formed by GNB1 and GNG2. Interacts (via cytoplasmic N-terminal domain) with KCNRG; this inhibits channel activity. Interacts with ANK3; this inhibits channel activity. Interacts with ADAM11. N-glycosylated. In terms of processing, palmitoylated on Cys-243; which may be required for membrane targeting. Post-translationally, phosphorylated on tyrosine residues. Phosphorylation increases in response to NRG1; this inhibits channel activity. Phosphorylation at Ser-446 regulates channel activity by down-regulating expression at the cell membrane. In terms of tissue distribution, detected in brain. Expressed in cerebellar cortex basket cell terminals, the area surround the Purkinje cell soma, and the pinceaux expansions encircling the axon initial segment (at protein level). Detected in the juxtaparanodal regions of the nodes of Ranvier in myelinated axons. Detected in the paranodal region in sciatic nerve. Detected on cell bodies in cerebellum, dorsal and ventral cochlear nucleus, pontine reticular nucleus, mesencephalic trigeminal nucleus, motor trigeminal nucleus and the pricipal sensory trigeminal nucleus. Detected in terminal fields of basket cells in the cerebellum corpus medullare. Detected in hippocampus CA3 pyramidal neurons and in the hilus and stratum moleculare of the dentate gyrus. Detected in the central nucleus and the external nucleus of the inferior colliculus. Detected in fiber tracts in the optic tract, external medullary lamina, stria terminalis, medulla, ventral pallidum and substantia nigra. Detected in neurons from dorsal root ganglion. Detected in neurons in the medial nucleus of the trapezoid body. Detected in midbrain dopamine neuron axon terminals. Detected in brain cortex. Detected in brainstem. Detected in juxtaparanodal regions of the nodes of Ranvier in the vagus nerve, but only at very low levels in the heart. Detected in the islet of Langerhans. Detected at the luminal membrane in distal convoluted tubules in the kidney (at protein level). Detected in hippocampus, thalamus, neocortex and ventral brain cortex, including the piriform and entorhinal cortex and the amygdala. Detected in midbrain dopamine neurons. Detected in heart atrium, ventricle, sinoatrial node and atrioventricular node.

The protein resides in the cell membrane. Its subcellular location is the cell projection. It is found in the axon. The protein localises to the membrane. It localises to the perikaryon. The protein resides in the dendrite. Its subcellular location is the cell junction. It is found in the synapse. The protein localises to the cytoplasmic vesicle. It localises to the endoplasmic reticulum. The protein resides in the presynaptic cell membrane. Its subcellular location is the presynapse. The catalysed reaction is K(+)(in) = K(+)(out). Its activity is regulated as follows. Inhibited by 4-aminopyridine (4-AP), tetraethylammonium (TEA) and dendrotoxin (DTX), but not by charybdotoxin (CTX). In terms of biological role, voltage-gated potassium channel that mediates transmembrane potassium transport in excitable membranes, primarily in the brain and the central nervous system, but also in the kidney. Contributes to the regulation of the membrane potential and nerve signaling, and prevents neuronal hyperexcitability. Forms tetrameric potassium-selective channels through which potassium ions pass in accordance with their electrochemical gradient. The channel alternates between opened and closed conformations in response to the voltage difference across the membrane. Can form functional homotetrameric channels and heterotetrameric channels that contain variable proportions of KCNA1, KCNA2, KCNA4, KCNA5, KCNA6, KCNA7, and possibly other family members as well; channel properties depend on the type of alpha subunits that are part of the channel. Channel properties are modulated by cytoplasmic beta subunits that regulate the subcellular location of the alpha subunits and promote rapid inactivation of delayed rectifier potassium channels. In vivo, membranes probably contain a mixture of heteromeric potassium channel complexes, making it difficult to assign currents observed in intact tissues to any particular potassium channel family member. Homotetrameric KCNA1 forms a delayed-rectifier potassium channel that opens in response to membrane depolarization, followed by slow spontaneous channel closure. In contrast, a heterotetrameric channel formed by KCNA1 and KCNA4 shows rapid inactivation. Regulates neuronal excitability in hippocampus, especially in mossy fibers and medial perforant path axons, preventing neuronal hyperexcitability. May function as down-stream effector for G protein-coupled receptors and inhibit GABAergic inputs to basolateral amygdala neurons. May contribute to the regulation of neurotransmitter release, such as gamma-aminobutyric acid (GABA) release. Plays a role in regulating the generation of action potentials and preventing hyperexcitability in myelinated axons of the vagus nerve, and thereby contributes to the regulation of heart contraction. Required for normal neuromuscular responses. Regulates the frequency of neuronal action potential firing in response to mechanical stimuli, and plays a role in the perception of pain caused by mechanical stimuli, but does not play a role in the perception of pain due to heat stimuli. Required for normal responses to auditory stimuli and precise location of sound sources, but not for sound perception. The use of toxins that block specific channels suggest that it contributes to the regulation of the axonal release of the neurotransmitter dopamine. Required for normal postnatal brain development and normal proliferation of neuronal precursor cells in the brain. Plays a role in the reabsorption of Mg(2+) in the distal convoluted tubules in the kidney and in magnesium ion homeostasis, probably via its effect on the membrane potential. The polypeptide is Potassium voltage-gated channel subfamily A member 1 (Mus musculus (Mouse)).